Reading from the N-terminus, the 392-residue chain is L-rhamnonate dehydratase (392 aa).

Positions 22 and 48 each coordinate substrate. Residues Asp-214, Glu-240, and Glu-268 each coordinate Mg(2+). The active-site Proton acceptor is His-318. Position 338 (Glu-338) interacts with substrate.

It belongs to the mandelate racemase/muconate lactonizing enzyme family. RhamD subfamily. As to quaternary structure, homooctamer; tetramer of dimers. Requires Mg(2+) as cofactor.

The enzyme catalyses L-rhamnonate = 2-dehydro-3-deoxy-L-rhamnonate + H2O. Catalyzes the dehydration of L-rhamnonate to 2-keto-3-deoxy-L-rhamnonate (KDR). This is L-rhamnonate dehydratase from Burkholderia ambifaria (strain ATCC BAA-244 / DSM 16087 / CCUG 44356 / LMG 19182 / AMMD) (Burkholderia cepacia (strain AMMD)).